A 353-amino-acid polypeptide reads, in one-letter code: Chorismate synthase (353 aa).

The NADP(+) site is built by Arg48 and Arg54. FMN contacts are provided by residues 125 to 127 (RSS), 238 to 239 (NA), Gly278, 293 to 297 (KPTSS), and Arg319.

It belongs to the chorismate synthase family. Homotetramer. FMNH2 is required as a cofactor.

It carries out the reaction 5-O-(1-carboxyvinyl)-3-phosphoshikimate = chorismate + phosphate. It functions in the pathway metabolic intermediate biosynthesis; chorismate biosynthesis; chorismate from D-erythrose 4-phosphate and phosphoenolpyruvate: step 7/7. In terms of biological role, catalyzes the anti-1,4-elimination of the C-3 phosphate and the C-6 proR hydrogen from 5-enolpyruvylshikimate-3-phosphate (EPSP) to yield chorismate, which is the branch point compound that serves as the starting substrate for the three terminal pathways of aromatic amino acid biosynthesis. This reaction introduces a second double bond into the aromatic ring system. This chain is Chorismate synthase, found in Buchnera aphidicola subsp. Schizaphis graminum (strain Sg).